We begin with the raw amino-acid sequence, 248 residues long: Tetraspanin-17 (248 aa).

Over 1 to 7 the chain is Cytoplasmic; the sequence is MSEVRTG. A helical membrane pass occupies residues 8-28; sequence FLTMTTIILISIGLTMMGTGL. Over 29–44 the chain is Extracellular; it reads YQKTTMSSCIRETSSQ. A helical transmembrane segment spans residues 45–65; that stretch reads FTLLGLLLLLIPQIGLYGICC. Topologically, residues 66–69 are cytoplasmic; the sequence is RSKR. The chain crosses the membrane as a helical span at residues 70–90; the sequence is LFNFFFYGMVVLIIIVSYYSI. At 91–210 the chain is on the extracellular side; it reads KCSIYNTTFG…ILKAIVHQWK (120 aa). 3 N-linked (GlcNAc...) asparagine glycosylation sites follow: Asn96, Asn109, and Asn141. Residues 211–231 traverse the membrane as a helical segment; it reads YLSMFAYPALVLSCISLAIAW. The Cytoplasmic segment spans residues 232 to 248; sequence SLKETIHENEDYRGSYS.

It belongs to the tetraspanin (TM4SF) family.

The protein localises to the membrane. In terms of biological role, may be involved in the regulation of cell differentiation. This chain is Tetraspanin-17 (TET17), found in Arabidopsis thaliana (Mouse-ear cress).